We begin with the raw amino-acid sequence, 389 residues long: Sterol methyltransferase-like 2 (389 aa).

The chain crosses the membrane as a helical span at residues 25–45; it reads LSWKGAVGLVAATGIGYVLII.

This sequence belongs to the class I-like SAM-binding methyltransferase superfamily. Erg6/SMT family.

It localises to the microsome membrane. Functionally, unable to convert squalene, botryococcene, cycloartenol, zymosterol or lanosterol to mono-, di-, tri- or tetramethylated derivatives. In Botryococcus braunii (Green alga), this protein is Sterol methyltransferase-like 2 (SMT-2).